An 821-amino-acid chain; its full sequence is MTDTGREGLQNREEGFELPLMSLREVVMFPRSIVPLFVGREASIKAIESAISDYGKKIFLVAQREPELEKPGPEDLFEVGTVSKILQLLRLPDGTIKVLFEGLYRARWDGTADAIIGADDAYPRVRVTRIEQESSEDDDEALVRATHEALDEYGKINKKLAQETLVAISALSDAARLADAIMPHLKVDYRRKQELLEVESGAERLEKVYELLQGEIAVASLEKRIKSRVKNQMERNQREYYLNEQIKAIHKEMGREDDPQAEVNELEARLAEKSMPEEAREKALREMKKLRQMPPSSAEYTVVRNYVDWILDLPWNTLKETEIDIDNARSILDADHYGLEKPKERILEYLAVQKLVNRLKGPILCLVGPPGVGKTSLAKSVAKATGREFVRLSLGGVRDEAEIRGHRRTYVGALPGKIIQSLKRVKHNNPLFCLDEIDKMSTDFRGDPSSALLEVLDPEQNSTFNDHYLDMDYDLSQVFFITTANSLHSIPLPLQDRMEIIRLPGYLETEKRRIAHDFLLPKQVEAHGLAASNLRISDNAVLEIIRSYTREAGVRNLEREIASVCRKAAMQVVEAGDKEKTLTVSRQNLGNFLGVKKYRHGEREDTSQVGVCTGLAWTEMGGELLVVETALMPGSGRVEITGKLGDVMTESAKAALSYLRSRSDLFGLRPDFHKEIDIHVHVPEGATPKDGPSAGITLATSMVSALLGIPVRNDVAMTGEITLRGRVLPIGGLREKLLAAHRGQIGKVLVPRENEKDLKEVPGEILKGLEIVFVDHVDEVLPQALMAQAESIFGGRTQSTPLYAKLRKDAQDGGATMPTAQ.

The region spanning 18-216 (LPLMSLREVV…KVYELLQGEI (199 aa)) is the Lon N-terminal domain. Residue 368–375 (GPPGVGKT) coordinates ATP. The region spanning 606-787 (TSQVGVCTGL…DEVLPQALMA (182 aa)) is the Lon proteolytic domain. Catalysis depends on residues Ser-693 and Lys-736.

This sequence belongs to the peptidase S16 family. Homohexamer. Organized in a ring with a central cavity.

It is found in the cytoplasm. The catalysed reaction is Hydrolysis of proteins in presence of ATP.. Functionally, ATP-dependent serine protease that mediates the selective degradation of mutant and abnormal proteins as well as certain short-lived regulatory proteins. Required for cellular homeostasis and for survival from DNA damage and developmental changes induced by stress. Degrades polypeptides processively to yield small peptide fragments that are 5 to 10 amino acids long. Binds to DNA in a double-stranded, site-specific manner. This Nitratidesulfovibrio vulgaris (strain ATCC 29579 / DSM 644 / CCUG 34227 / NCIMB 8303 / VKM B-1760 / Hildenborough) (Desulfovibrio vulgaris) protein is Lon protease.